A 34-amino-acid chain; its full sequence is U4-theraphotoxin-Hs1a (34 aa).

Cystine bridges form between Cys3/Cys17, Cys10/Cys22, and Cys16/Cys33.

This sequence belongs to the neurotoxin 14 (magi-1) family. 05 (ICK-7) subfamily. As to expression, expressed by the venom gland.

The protein localises to the secreted. Functionally, intracisternal injection paralyzes mice. This chain is U4-theraphotoxin-Hs1a, found in Cyriopagopus schmidti (Chinese bird spider).